The chain runs to 137 residues: uncharacterized protein (137 aa).

The tract at residues 116–137 is disordered; the sequence is ARPPRGSGGTRTARNGARTASE. The segment covering 125 to 137 has biased composition (polar residues); that stretch reads TRTARNGARTASE.

This is an uncharacterized protein from Mycobacterium bovis (strain ATCC BAA-935 / AF2122/97).